Reading from the N-terminus, the 243-residue chain is tRNA1(Val) (adenine(37)-N6)-methyltransferase (243 aa).

It belongs to the methyltransferase superfamily. tRNA (adenine-N(6)-)-methyltransferase family.

It is found in the cytoplasm. The catalysed reaction is adenosine(37) in tRNA1(Val) + S-adenosyl-L-methionine = N(6)-methyladenosine(37) in tRNA1(Val) + S-adenosyl-L-homocysteine + H(+). Functionally, specifically methylates the adenine in position 37 of tRNA(1)(Val) (anticodon cmo5UAC). This is tRNA1(Val) (adenine(37)-N6)-methyltransferase from Shewanella loihica (strain ATCC BAA-1088 / PV-4).